Consider the following 257-residue polypeptide: Putative hydro-lyase Bcen2424_3550 (257 aa).

This sequence belongs to the D-glutamate cyclase family.

This Burkholderia cenocepacia (strain HI2424) protein is Putative hydro-lyase Bcen2424_3550.